Reading from the N-terminus, the 440-residue chain is Histidinol dehydrogenase (440 aa).

3 residues coordinate NAD(+): Tyr139, Gln201, and Asn224. The substrate site is built by Ser247, Gln269, and His272. 2 residues coordinate Zn(2+): Gln269 and His272. Catalysis depends on proton acceptor residues Glu337 and His338. Substrate-binding residues include His338, Asp371, Glu425, and His430. Residue Asp371 participates in Zn(2+) binding. Zn(2+) is bound at residue His430.

Belongs to the histidinol dehydrogenase family. Requires Zn(2+) as cofactor.

The enzyme catalyses L-histidinol + 2 NAD(+) + H2O = L-histidine + 2 NADH + 3 H(+). Its pathway is amino-acid biosynthesis; L-histidine biosynthesis; L-histidine from 5-phospho-alpha-D-ribose 1-diphosphate: step 9/9. Its function is as follows. Catalyzes the sequential NAD-dependent oxidations of L-histidinol to L-histidinaldehyde and then to L-histidine. The protein is Histidinol dehydrogenase of Prochlorococcus marinus (strain MIT 9312).